Here is a 354-residue protein sequence, read N- to C-terminus: Rhodopsin (354 aa).

Residues 1–36 lie on the Extracellular side of the membrane; the sequence is MNGTEGPYFNVPMVNTTGIVRSPYEYPQYYLVSPAA. 2 N-linked (GlcNAc...) asparagine glycosylation sites follow: Asn-2 and Asn-15. Residues 37 to 61 traverse the membrane as a helical segment; that stretch reads YAALGAYMFFLILVGFPINFLTLYV. The Cytoplasmic segment spans residues 62 to 73; the sequence is TLEHKKLRTPLN. Residues 74–96 form a helical membrane-spanning segment; sequence YILLNLAVADLFMVFGGFTTTMY. The Extracellular portion of the chain corresponds to 97 to 110; the sequence is TSMHGYFVLGRLGC. Cys-110 and Cys-187 are joined by a disulfide. A helical transmembrane segment spans residues 111–133; that stretch reads NLEGFFATLGGEIGLWSLVVLAI. Residues 134-136 carry the 'Ionic lock' involved in activated form stabilization motif; sequence ERW. Topologically, residues 134-152 are cytoplasmic; sequence ERWVVVCKPISNFRFGENH. Residues 153–173 traverse the membrane as a helical segment; sequence AIMGLVFTWIMAASCAVPPLV. Residues 174–202 are Extracellular-facing; sequence GWSRYIPEGMQCSCGVDYYTRAEGFNNES. Residues 203–224 traverse the membrane as a helical segment; it reads FVVYMFVCHFLIPLIVVFFCYG. Over 225–252 the chain is Cytoplasmic; the sequence is RLLCAVKEAAAAQQESETTQRAEREVTR. A helical membrane pass occupies residues 253–274; the sequence is MVVIMVIGFLVCWLPYASVAWY. Topologically, residues 275–286 are extracellular; sequence IFTNQGSEFGPL. The helical transmembrane segment at 287 to 308 threads the bilayer; that stretch reads FMTIPAFFAKSSSIYNPAIYIC. Lys-296 is modified (N6-(retinylidene)lysine). At 309-354 the chain is on the cytoplasmic side; the sequence is MNKQFRNCMITTLCCGKNPFEEEEGASTTASKTEASSVSSSSVSPA. Residues Cys-322 and Cys-323 are each lipidated (S-palmitoyl cysteine). The tract at residues 332 to 354 is disordered; that stretch reads EGASTTASKTEASSVSSSSVSPA. A compositionally biased stretch (low complexity) spans 334–354; sequence ASTTASKTEASSVSSSSVSPA.

This sequence belongs to the G-protein coupled receptor 1 family. Opsin subfamily. Phosphorylated on some or all of the serine and threonine residues present in the C-terminal region. In terms of processing, contains one covalently linked retinal chromophore.

The protein localises to the membrane. It is found in the cell projection. Its subcellular location is the cilium. It localises to the photoreceptor outer segment. In terms of biological role, photoreceptor required for image-forming vision at low light intensity. While most salt water fish species use retinal as chromophore, most freshwater fish use 3-dehydroretinal, or a mixture of retinal and 3-dehydroretinal. Light-induced isomerization of 11-cis to all-trans retinal triggers a conformational change that activates signaling via G-proteins. Subsequent receptor phosphorylation mediates displacement of the bound G-protein alpha subunit by arrestin and terminates signaling. This Oryzias latipes (Japanese rice fish) protein is Rhodopsin (rho).